A 692-amino-acid chain; its full sequence is Follicle-stimulating hormone receptor (692 aa).

An N-terminal signal peptide occupies residues 1–17; that stretch reads MALLLVSLLAFLGTGSG. Disulfide bonds link C18–C25 and C23–C32. The 29-residue stretch at 18-46 folds into the LRRNT domain; the sequence is CHHWLCHCSNRVFLCQDSKVTEIPTDLPR. At 18–365 the chain is on the extracellular side; it reads CHHWLCHCSN…EDIMGYNILR (348 aa). LRR repeat units lie at residues 49–72, 73–97, 98–118, 119–143, 144–169, 170–192, 193–216, 217–240, and 241–259; these read IELR…FGDL, EKIE…LPKL, HEIR…AFQN, LPSL…KIQS, LQKV…MGLS, FESV…AFNG, TQLD…VFQG, ASGP…GLEN, and LKKL…PNLD. 2 N-linked (GlcNAc...) asparagine glycosylation sites follow: N191 and N199. 4 disulfides stabilise this stretch: C275/C345, C276/C292, C276/C355, and C292/C337. The N-linked (GlcNAc...) asparagine glycan is linked to N293. Y334 bears the Sulfotyrosine mark. Residues 366-386 form a helical membrane-spanning segment; it reads VLIWFISILAITGNTTVLVVL. At 387–397 the chain is on the cytoplasmic side; sequence TTSQYKLTVPR. The helical transmembrane segment at 398–420 threads the bilayer; the sequence is FLMCNLAFADLCIGIYLLLIASV. Over 421-442 the chain is Extracellular; that stretch reads DIHTKSQYHNYAIDWQTGAGCD. C441 and C516 form a disulfide bridge. The helical transmembrane segment at 443-464 threads the bilayer; sequence AAGFFTVFASELSVYTLTAITL. The Cytoplasmic portion of the chain corresponds to 465–484; sequence ERWHTITHAMQLECKVQLRH. Residues 485 to 507 traverse the membrane as a helical segment; it reads AASVMVLGWTFAFAAALFPIFGI. At 508-527 the chain is on the extracellular side; that stretch reads SSYMKVSICLPMDIDSPLSQ. A helical transmembrane segment spans residues 528–549; it reads LYVMALLVLNVLAFVVICGCYT. Residues 550–572 are Cytoplasmic-facing; it reads HIYLTVRNPTIVSSSSDTKIAKR. A helical membrane pass occupies residues 573–596; the sequence is MATLIFTDFLCMAPISFFAISASL. Residues 597–607 are Extracellular-facing; it reads KVPLITVSKAK. A helical membrane pass occupies residues 608-629; that stretch reads ILLVLFYPINSCANPFLYAIFT. Residues 630–692 lie on the Cytoplasmic side of the membrane; it reads KNFRRDFFIL…LVPLNHSSQN (63 aa).

It belongs to the G-protein coupled receptor 1 family. FSH/LSH/TSH subfamily. Homotrimer. Functions as a homotrimer binding the FSH hormone heterodimer composed of CGA and FSHB. Interacts with ARRB2. Interacts with APPL2; interaction is independent of follicle stimulating hormone stimulation. N-glycosylated; indirectly required for FSH-binding, possibly via a conformational change that allows high affinity binding of hormone. In terms of processing, sulfated. In terms of tissue distribution, sertoli cells and ovarian granulosa cells.

Its subcellular location is the cell membrane. In terms of biological role, g protein-coupled receptor for follitropin, the follicle-stimulating hormone. Through cAMP production activates the downstream PI3K-AKT and ERK1/ERK2 signaling pathways. The polypeptide is Follicle-stimulating hormone receptor (Fshr) (Rattus norvegicus (Rat)).